Consider the following 292-residue polypeptide: MTASLLSGKPLAKLIQQQAQTEAKVLAEEGTCPTLAVVVATEDSSTHWYVRSIERAAEAAGINCRIIDVGHDATEQVLIAVLKDLSAELSVNGIILQTPLPPGVRTQELVKYIAPEKDIDGANPLSLGLLAVGERAFAPATARAVVEILDHFEIPVAGRNVVVVGRSTVVGKPLSLLLLQKDATTTVCHSKSGALGTYTKTADVVVVAAGRTGLLTGADVSEHSVVIDVGTNVLSDGSLTGDVDEASVRPVAAALTPVPGGVGSVTTALLLLHTAEAAREQSRATSAPVLTR.

Residues 165-167, Ser190, and Thr231 contribute to the NADP(+) site; that span reads GRS.

Belongs to the tetrahydrofolate dehydrogenase/cyclohydrolase family. As to quaternary structure, homodimer.

It carries out the reaction (6R)-5,10-methylene-5,6,7,8-tetrahydrofolate + NADP(+) = (6R)-5,10-methenyltetrahydrofolate + NADPH. The catalysed reaction is (6R)-5,10-methenyltetrahydrofolate + H2O = (6R)-10-formyltetrahydrofolate + H(+). Its pathway is one-carbon metabolism; tetrahydrofolate interconversion. Catalyzes the oxidation of 5,10-methylenetetrahydrofolate to 5,10-methenyltetrahydrofolate and then the hydrolysis of 5,10-methenyltetrahydrofolate to 10-formyltetrahydrofolate. This Arthrobacter globiformis protein is Bifunctional protein FolD.